Reading from the N-terminus, the 114-residue chain is MIARRNPEPLRFLPDEARSLPPPKLTDPRLLYIGFLGYCSGLIDNLIRRRPIATAGLHRQLLYITAFFFAGYYLVKREDYLYAVRDREMFGYMKLHPEDFPEEDVYCCGAERRG.

Residues 56 to 75 (GLHRQLLYITAFFFAGYYLV) traverse the membrane as a helical segment.

This sequence belongs to the complex I NDUFC2 subunit family. As to quaternary structure, complex I is composed of 45 different subunits.

The protein resides in the mitochondrion inner membrane. Accessory subunit of the mitochondrial membrane respiratory chain NADH dehydrogenase (Complex I), that is believed not to be involved in catalysis. Complex I functions in the transfer of electrons from NADH to the respiratory chain. The immediate electron acceptor for the enzyme is believed to be ubiquinone. This is NADH dehydrogenase [ubiquinone] 1 subunit C2, isoform 2 (NDUFC2-KCTD14) from Homo sapiens (Human).